Consider the following 141-residue polypeptide: NADPH-dependent 7-cyano-7-deazaguanine reductase (141 aa).

Catalysis depends on Cys56, which acts as the Thioimide intermediate. The active-site Proton donor is the Asp63. Substrate-binding positions include 78-80 and 97-98; these read VEL and HE.

The protein belongs to the GTP cyclohydrolase I family. QueF type 1 subfamily.

The protein localises to the cytoplasm. The enzyme catalyses 7-aminomethyl-7-carbaguanine + 2 NADP(+) = 7-cyano-7-deazaguanine + 2 NADPH + 3 H(+). It functions in the pathway tRNA modification; tRNA-queuosine biosynthesis. Catalyzes the NADPH-dependent reduction of 7-cyano-7-deazaguanine (preQ0) to 7-aminomethyl-7-deazaguanine (preQ1). This chain is NADPH-dependent 7-cyano-7-deazaguanine reductase, found in Trichodesmium erythraeum (strain IMS101).